The chain runs to 570 residues: Periplasmic trehalase (570 aa).

An N-terminal signal peptide occupies residues 1-34 (MIPPEIRRSVLLQKAIKLALAGTLLTFASFSATA). Residues arginine 159, 166–167 (WD), asparagine 203, 212–214 (HSQ), 284–286 (RPE), and glycine 317 contribute to the substrate site. Residues aspartate 319 and glutamate 503 each act as proton donor/acceptor in the active site. Residue glutamate 518 participates in substrate binding. The segment at 544 to 570 (KPCDSVPSTRPASLSATPTKTPSAATQ) is disordered. Positions 554 to 570 (PASLSATPTKTPSAATQ) are enriched in low complexity.

It belongs to the glycosyl hydrolase 37 family. In terms of assembly, monomer.

The protein resides in the periplasm. The enzyme catalyses alpha,alpha-trehalose + H2O = alpha-D-glucose + beta-D-glucose. Provides the cells with the ability to utilize trehalose at high osmolarity by splitting it into glucose molecules that can subsequently be taken up by the phosphotransferase-mediated uptake system. In Salmonella paratyphi C (strain RKS4594), this protein is Periplasmic trehalase.